The chain runs to 49 residues: Large ribosomal subunit protein bL33B (49 aa).

It belongs to the bacterial ribosomal protein bL33 family.

The protein is Large ribosomal subunit protein bL33B of Staphylococcus saprophyticus subsp. saprophyticus (strain ATCC 15305 / DSM 20229 / NCIMB 8711 / NCTC 7292 / S-41).